Reading from the N-terminus, the 218-residue chain is Large ribosomal subunit protein bL25 (218 aa).

The disordered stretch occupies residues 187 to 218 (SATAAVEEAKEDGAPEESAQGQGAAEAQETGK). A compositionally biased stretch (low complexity) spans 202-218 (EESAQGQGAAEAQETGK).

This sequence belongs to the bacterial ribosomal protein bL25 family. CTC subfamily. In terms of assembly, part of the 50S ribosomal subunit; part of the 5S rRNA/L5/L18/L25 subcomplex. Contacts the 5S rRNA. Binds to the 5S rRNA independently of L5 and L18.

Functionally, this is one of the proteins that binds to the 5S RNA in the ribosome where it forms part of the central protuberance. The protein is Large ribosomal subunit protein bL25 of Anaplasma marginale (strain Florida).